Consider the following 82-residue polypeptide: Small ribosomal subunit protein bS18 (82 aa).

The tract at residues 1–25 is disordered; that stretch reads MTEMNQTAIRRPFHRRRKTCPFSGT.

The protein belongs to the bacterial ribosomal protein bS18 family. In terms of assembly, part of the 30S ribosomal subunit. Forms a tight heterodimer with protein bS6.

In terms of biological role, binds as a heterodimer with protein bS6 to the central domain of the 16S rRNA, where it helps stabilize the platform of the 30S subunit. This chain is Small ribosomal subunit protein bS18, found in Bartonella henselae (strain ATCC 49882 / DSM 28221 / CCUG 30454 / Houston 1) (Rochalimaea henselae).